The chain runs to 83 residues: Conotoxin Pu6.1 (83 aa).

A signal peptide spans 1-19 (MKLVLAIVLILMLVSLSTG). A propeptide spanning residues 20–42 (AEESGQEISMVGPPLYIWDPIPP) is cleaved from the precursor. Disulfide bonds link Cys43-Cys57, Cys50-Cys62, and Cys56-Cys78.

It belongs to the conotoxin I3 superfamily. In terms of tissue distribution, expressed by the venom duct.

It is found in the secreted. The chain is Conotoxin Pu6.1 from Conus pulicarius (Flea-bitten cone).